A 475-amino-acid polypeptide reads, in one-letter code: ATP synthase subunit beta 1 (475 aa).

153–160 (GGAGVGKT) lines the ATP pocket.

The protein belongs to the ATPase alpha/beta chains family. F-type ATPases have 2 components, CF(1) - the catalytic core - and CF(0) - the membrane proton channel. CF(1) has five subunits: alpha(3), beta(3), gamma(1), delta(1), epsilon(1). CF(0) has three main subunits: a(1), b(2) and c(9-12). The alpha and beta chains form an alternating ring which encloses part of the gamma chain. CF(1) is attached to CF(0) by a central stalk formed by the gamma and epsilon chains, while a peripheral stalk is formed by the delta and b chains.

The protein resides in the cell membrane. The catalysed reaction is ATP + H2O + 4 H(+)(in) = ADP + phosphate + 5 H(+)(out). Its function is as follows. Produces ATP from ADP in the presence of a proton gradient across the membrane. The catalytic sites are hosted primarily by the beta subunits. In Mycoplasmopsis pulmonis (strain UAB CTIP) (Mycoplasma pulmonis), this protein is ATP synthase subunit beta 1.